A 229-amino-acid chain; its full sequence is Ribosome maturation factor RimM (229 aa).

The segment at 1–39 (MAGHDSGSAKRGRSPSFGVFVRKPVERAPTKGAGDGAAD) is disordered. A PRC barrel domain is found at 148-229 (ADEFYWVDLI…RIVVDWEADY (82 aa)).

The protein belongs to the RimM family. In terms of assembly, binds ribosomal protein uS19.

It is found in the cytoplasm. In terms of biological role, an accessory protein needed during the final step in the assembly of 30S ribosomal subunit, possibly for assembly of the head region. Essential for efficient processing of 16S rRNA. May be needed both before and after RbfA during the maturation of 16S rRNA. It has affinity for free ribosomal 30S subunits but not for 70S ribosomes. The chain is Ribosome maturation factor RimM from Burkholderia thailandensis (strain ATCC 700388 / DSM 13276 / CCUG 48851 / CIP 106301 / E264).